Consider the following 459-residue polypeptide: Ammonium transporter Rh type B (459 aa).

Over 1–10 the chain is Cytoplasmic; the sequence is MAESTNLRLR. Residues 11 to 31 traverse the membrane as a helical segment; it reads LPLICIILEVILIILFGVLVE. Residues 32–58 are Extracellular-facing; that stretch reads YNDDTDAKKWNKNNSTDPATNEFYYRY. Residue N45 is glycosylated (N-linked (GlcNAc...) asparagine). The chain crosses the membrane as a helical span at residues 59–79; it reads PSFQDVHVMIFVGFGFLMTFL. The Cytoplasmic segment spans residues 80 to 87; sequence QRYGFSSM. Residues 88–108 form a helical membrane-spanning segment; sequence GFNFLIAAFSLQWATLMQGFF. Topologically, residues 109-121 are extracellular; sequence HGMHHGKIHVGVT. The chain crosses the membrane as a helical span at residues 122–142; that stretch reads SMINADFCTGAVLISFGAVLG. The Cytoplasmic segment spans residues 143 to 149; the sequence is KTSPVQL. A helical transmembrane segment spans residues 150–170; that stretch reads LVMAILEVTLFAVNEYILLSI. The Extracellular portion of the chain corresponds to 171–176; sequence LGANDA. The helical transmembrane segment at 177–197 threads the bilayer; the sequence is GGSMTIHTFGAYFGLMVTRIL. Over 198–216 the chain is Cytoplasmic; it reads HRPNLDKSKHKNSSVYHSD. The chain crosses the membrane as a helical span at residues 217 to 237; it reads LFAMIGTIFLWMFWPSFNSAI. The Extracellular segment spans residues 238-248; that stretch reads TQYGDPQHRTA. Residues 249–269 form a helical membrane-spanning segment; that stretch reads ANTYYSLAACTLATFGFSSLV. At 270 to 274 the chain is on the cytoplasmic side; that stretch reads NPEGK. A helical transmembrane segment spans residues 275–295; sequence LDMVHIQNAALAGGVAVGTAG. E296 is a topological domain (extracellular). A helical transmembrane segment spans residues 297–317; the sequence is MMLTPFGSMIVGFLAGTISVL. Residues 318-340 lie on the Cytoplasmic side of the membrane; that stretch reads GYKYLTPFMESKLKIQDTCGIHN. A helical transmembrane segment spans residues 341-361; the sequence is LHGMPGILGAIVGAVTAALAS. The Extracellular segment spans residues 362–392; the sequence is RDVYGNGLDKVFLEAADNSQWSAQTKGGFQA. The helical transmembrane segment at 393 to 413 threads the bilayer; that stretch reads ISLAVTLGIALIGGLITGFLL. Residues 414 to 459 are Cytoplasmic-facing; sequence KLPIYGTPPDTQCFEDAVYWEVPGEEEDHHELNEVSTQNEVEKLNS. The disordered stretch occupies residues 440–459; sequence EDHHELNEVSTQNEVEKLNS.

Belongs to the ammonium transporter (TC 2.A.49) family. Rh subfamily.

It is found in the basolateral cell membrane. The protein localises to the cytoplasmic vesicle membrane. In terms of biological role, functions as an ammonia transporter. May play a role in the elimination of ammonia in the gill. The polypeptide is Ammonium transporter Rh type B (rhbg) (Danio rerio (Zebrafish)).